The chain runs to 554 residues: Glucose-6-phosphate isomerase (554 aa).

Serine 2 carries the post-translational modification N-acetylserine. Position 53 is a phosphothreonine (threonine 53). D-glucose 6-phosphate is bound by residues 168 to 169, 218 to 223, glutamine 363, glutamate 367, histidine 398, and lysine 520; these read GS and SKTFTT. Threonine 220 bears the Phosphothreonine mark. Glutamate 367 functions as the Proton donor in the catalytic mechanism. Active-site residues include histidine 398 and lysine 520.

It belongs to the GPI family. As to quaternary structure, homodimer.

Its subcellular location is the cytoplasm. It localises to the cytosol. The enzyme catalyses alpha-D-glucose 6-phosphate = beta-D-fructose 6-phosphate. It participates in carbohydrate degradation; glycolysis; D-glyceraldehyde 3-phosphate and glycerone phosphate from D-glucose: step 2/4. Its activity is regulated as follows. Strongly inhibited by the polyol (sugar alcohol) phosphate D-glucitol 6-phosphate (D-sorbitol 6-phosphate). Also inhibited by the polyol (sugar alcohol) phosphate D-ribitol 5-phosphate. Functionally, in the cytoplasm, catalyzes the conversion of glucose-6-phosphate to fructose-6-phosphate, the second step in glycolysis, and the reverse reaction during gluconeogenesis. This Saccharomyces cerevisiae (strain ATCC 204508 / S288c) (Baker's yeast) protein is Glucose-6-phosphate isomerase (PGI1).